The sequence spans 374 residues: 5-hydroxytryptamine receptor 1D (374 aa).

Residues 1 to 35 (MSPPNQSLEGLPQEASNRSLNVTGAWDPEVLQALR) are Extracellular-facing. 3 N-linked (GlcNAc...) asparagine glycosylation sites follow: Asn5, Asn17, and Asn21. The helical transmembrane segment at 36 to 61 (ISLVVVLSVITLATVLSNAFVLTTIL) threads the bilayer. Residues 62–72 (LTKKLHTPANY) are Cytoplasmic-facing. Residues 73-94 (LIGSLATTDLLVSILVMPISIA) traverse the membrane as a helical segment. Topologically, residues 95-106 (YTTTRTWNFGQI) are extracellular. A helical transmembrane segment spans residues 107–131 (LCDIWVSSDITCCTASILHLCVIAL). The cysteines at positions 108 and 185 are disulfide-linked. Residues Asp115 and Cys119 each contribute to the serotonin site. Positions 132–134 (DRY) match the DRY motif; important for ligand-induced conformation changes motif. Residues 132-151 (DRYWAITDALEYSKRRTAGH) lie on the Cytoplasmic side of the membrane. The helical transmembrane segment at 152 to 173 (AAAMIAAVWIISICISIPPLFW) threads the bilayer. Topologically, residues 174-191 (RQATAHEEMSDCLVNTSQ) are extracellular. A helical membrane pass occupies residues 192–215 (ISYTIYSTCGAFYIPSILLIILYG). The Cytoplasmic segment spans residues 216 to 297 (RIYVAARSRI…ISAARERKAT (82 aa)). A helical membrane pass occupies residues 298-323 (KTLGIILGAFIICWLPFFVVSLVLPI). Ser318 contacts serotonin. At 324–332 (CRDSCWIHP) the chain is on the extracellular side. A helical transmembrane segment spans residues 333-356 (ALFDFFTWLGYLNSLINPVIYTVF). The short motif at 349-353 (NPVIY) is the NPxxY motif; important for ligand-induced conformation changes and signaling element. The Cytoplasmic portion of the chain corresponds to 357-374 (NEDFRQAFQKVVHFRKIS).

The protein belongs to the G-protein coupled receptor 1 family. In terms of assembly, homodimer. Heterodimer with HTR1B. In terms of tissue distribution, detected in the motor column in spinal cord, and in several cranial motor nuclei, including nucleus ambiguous, oculomotoris, trochelaris and abducens. Detected in gamma motor neurons in the lumbar spinal cord. Detected in proprioceptive sensory neurons in dorsal root ganglia.

It is found in the cell membrane. Its function is as follows. G-protein coupled receptor for 5-hydroxytryptamine (serotonin). Also functions as a receptor for ergot alkaloid derivatives, various anxiolytic and antidepressant drugs and other psychoactive substances. Ligand binding causes a conformation change that triggers signaling via guanine nucleotide-binding proteins (G proteins) and modulates the activity of downstream effectors, such as adenylate cyclase. HTR1D is coupled to G(i)/G(o) G alpha proteins and mediates inhibitory neurotransmission by inhibiting adenylate cyclase activity. Regulates the release of 5-hydroxytryptamine in the brain, and thereby affects neural activity. May also play a role in regulating the release of other neurotransmitters. May play a role in vasoconstriction. The chain is 5-hydroxytryptamine receptor 1D (Htr1d) from Mus musculus (Mouse).